We begin with the raw amino-acid sequence, 331 residues long: Dioxygenase swnH2 (331 aa).

Polar residues predominate over residues 1–11; the sequence is MINSDAQSAQK. The segment at 1 to 31 is disordered; it reads MINSDAQSAQKQVEVEKPDEKYSAPRLLPPI. The span at 13-23 shows a compositional bias: basic and acidic residues; the sequence is VEVEKPDEKYS. Positions 173, 175, and 250 each coordinate Fe cation.

The protein belongs to the PhyH family. Homodimer. It depends on Fe cation as a cofactor.

It functions in the pathway mycotoxin biosynthesis. In terms of biological role, dioxygenase; part of the gene cluster that mediates the biosynthesis of swainsonine (SW), a cytotoxic fungal alkaloid and a potential cancer therapy drug. Swainsonine production occurs via a multibranched pathway and is dispensable for fungal colonization of plants and infection of insect hosts. The first step of swainsonine biosynthesis is the production of the precursor pipecolic acid (PA) via conversion of L-lysine (Lys) to 1-piperideine-6-carboxylate (P6C) by the aminotransferase swnA, the latter being further reduced to PA by the reductase swnR. PA can be converted from lysine by both the SW biosynthetic cluster and the unclustered genes such as lysine cyclodeaminase. The PKS-NRPS hybrid synthetase swnK uptakes and condensates PA and malonyl-CoA with and without skipping of the ketoreductase (KR) domain in order to produce 3 intermediates, 1-oxoindolizidine, (1S)-1-hydroxyindolizin, and (1R)-1-hydroxyindolizine; with the transisomer (1S)-1-hydroxyindolizin being predominant. The terminal thioester reductase (TE) domain of swnK is involved in reduction of the thioester bond to release the intermediate aldehydes. The oxidoreductase swnN could contribute to the reduction of 1-oxoindolizidine to (1S)-1-hydroxyindolizin and (1R)-1-hydroxyindolizine, contributing to the major route of SW production. The dioxygenase swnH2 would be responsible for the oxidization of (1R)-1-hydroxyindolizine into (1R,2S)-1,2-dihydroxyindolizine and of (1S)-1-hydroxyindolizin to yield both (1R,2S)-1,2-dihydroxyindolizine and (1S,2S)-1,2-dihydroxyindolizine. The dioxygenase swnH1 then performs the conversion of the 1,2-dihydroxyindolizine epimers to SW. This Metarhizium robertsii (strain ARSEF 23 / ATCC MYA-3075) (Metarhizium anisopliae (strain ARSEF 23)) protein is Dioxygenase swnH2.